Consider the following 194-residue polypeptide: Putative manganese efflux pump MntP (194 aa).

A run of 6 helical transmembrane segments spans residues 2 to 22 (ISII…AFAV), 43 to 63 (LWFG…ASTF), 67 to 87 (VTQF…GNMV), 111 to 131 (PLAV…AFMF), 137 to 157 (AFAI…GLHI), and 174 to 194 (GVVL…VIAF).

Belongs to the MntP (TC 9.B.29) family.

Its subcellular location is the cell membrane. Functionally, probably functions as a manganese efflux pump. The chain is Putative manganese efflux pump MntP from Bifidobacterium longum (strain DJO10A).